The sequence spans 859 residues: Leucine--tRNA ligase (859 aa).

The 'HIGH' region motif lies at 42 to 52; that stretch reads PYPSGRLHMGH. The short motif at 618–622 is the 'KMSKS' region element; that stretch reads KMSKS. Lys-621 contributes to the ATP binding site.

It belongs to the class-I aminoacyl-tRNA synthetase family.

The protein resides in the cytoplasm. The enzyme catalyses tRNA(Leu) + L-leucine + ATP = L-leucyl-tRNA(Leu) + AMP + diphosphate. This chain is Leucine--tRNA ligase, found in Shewanella oneidensis (strain ATCC 700550 / JCM 31522 / CIP 106686 / LMG 19005 / NCIMB 14063 / MR-1).